We begin with the raw amino-acid sequence, 1123 residues long: Nicotinic receptor-associated protein 4 (1123 aa).

Positions 1 to 18 are cleaved as a signal peptide; it reads MGSLPLILLSLLLPGALA. Over 19 to 1071 the chain is Lumenal; it reads NVYSCAGSVK…TSSKRANDVD (1053 aa). The chain crosses the membrane as a helical span at residues 1072-1092; the sequence is ISVGTFLSLPFFVTLALVFFN. Residues 1093-1123 lie on the Cytoplasmic side of the membrane; sequence QNRVLELLGTFIDWARNTFAPTADNHHRKRK.

As to quaternary structure, may interact with nra-2 in the ER. Expressed in body wall, pharyngeal, uterine and vulval muscles, motor neurons, nerve ring, motor and ventral cord neurons, hypodermal cells in the tail, vulval epithelium and intestine.

Its subcellular location is the endoplasmic reticulum membrane. Involved in the recognition and selection of protein complexes to exit the endoplasmic reticulum (ER). In muscles, regulates levamisole-sensitive nicotinic acetylcholine receptor (L-AChR) subunit composition, possibly by allowing only specific L-AChR subunit combinations to exit the ER. Specifically, may promote the inclusion of alpha subunit unc-38 into and the exclusion of unc-29 from L-AChR. Regulates L-AChR sensitivity to agonists such as nicotine and levamisole at neuro-muscular junctions. The sequence is that of Nicotinic receptor-associated protein 4 from Caenorhabditis elegans.